The chain runs to 532 residues: Neutral amino acid transporter A (532 aa).

The residue at position 1 (Met-1) is an N-acetylmethionine. Positions 1–10 (MEKSNETNGY) are enriched in polar residues. Positions 1–25 (MEKSNETNGYLDSAQAGPAAGPGAP) are disordered. The Cytoplasmic segment spans residues 1–41 (MEKSNETNGYLDSAQAGPAAGPGAPGTAAGRARRCAGFLRR). Low complexity predominate over residues 14–25 (AQAGPAAGPGAP). Transmembrane regions (helical) follow at residues 42 to 62 (QALV…GAAL), 88 to 108 (MIIL…LDAS), and 119 to 139 (AYFG…AFII). Residues 140–216 (KPGSGAQTLQ…VTHEKIPIGT (77 aa)) are Extracellular-facing. Residues Asn-201 and Asn-206 are each glycosylated (N-linked (GlcNAc...) asparagine). 6 consecutive transmembrane segments (helical) span residues 217-237 (EIEG…GVAL), 257-277 (ATMV…MFLV), 298-318 (IFAS…LIYF), 328-348 (FLLG…SSAT), 373-393 (IGAT…AVFI), and 418-438 (VGAA…LEAI). A disordered region spans residues 500 to 532 (CKSEEETSPLVTHQNPAGPVASAPELESKESVL). Residues Ser-507, Ser-527, and Ser-530 each carry the phosphoserine modification.

This sequence belongs to the dicarboxylate/amino acid:cation symporter (DAACS) (TC 2.A.23) family. SLC1A4 subfamily. Expressed mostly in brain, muscle, and pancreas but detected in all tissues examined.

The protein localises to the membrane. It is found in the melanosome. It carries out the reaction L-threonine(in) + Na(+)(in) = L-threonine(out) + Na(+)(out). The catalysed reaction is L-serine(in) + Na(+)(in) = L-serine(out) + Na(+)(out). It catalyses the reaction L-cysteine(in) + Na(+)(in) = L-cysteine(out) + Na(+)(out). The enzyme catalyses L-alanine(in) + Na(+)(in) = L-alanine(out) + Na(+)(out). It carries out the reaction L-proline(in) + Na(+)(in) = L-proline(out) + Na(+)(out). The catalysed reaction is 4-hydroxy-L-proline(in) + Na(+)(in) = 4-hydroxy-L-proline(out) + Na(+)(out). In terms of biological role, sodium-dependent neutral amino-acid transporter that mediates transport of alanine, serine, cysteine, proline, hydroxyproline and threonine. This chain is Neutral amino acid transporter A, found in Homo sapiens (Human).